The sequence spans 342 residues: N-acetyl-gamma-glutamyl-phosphate reductase (342 aa).

The active site involves Cys149.

The protein belongs to the NAGSA dehydrogenase family. Type 1 subfamily.

It is found in the cytoplasm. The enzyme catalyses N-acetyl-L-glutamate 5-semialdehyde + phosphate + NADP(+) = N-acetyl-L-glutamyl 5-phosphate + NADPH + H(+). Its pathway is amino-acid biosynthesis; L-arginine biosynthesis; N(2)-acetyl-L-ornithine from L-glutamate: step 3/4. Functionally, catalyzes the NADPH-dependent reduction of N-acetyl-5-glutamyl phosphate to yield N-acetyl-L-glutamate 5-semialdehyde. This is N-acetyl-gamma-glutamyl-phosphate reductase from Roseobacter denitrificans (strain ATCC 33942 / OCh 114) (Erythrobacter sp. (strain OCh 114)).